A 491-amino-acid chain; its full sequence is Glutamate--tRNA ligase (491 aa).

A 'HIGH' region motif is present at residues 14-24 (PSPTGSPHVGL). 4 residues coordinate Zn(2+): Cys-111, Cys-113, Cys-136, and Asp-138. The 'KMSKS' region motif lies at 257-261 (KLSKR). Lys-260 serves as a coordination point for ATP.

The protein belongs to the class-I aminoacyl-tRNA synthetase family. Glutamate--tRNA ligase type 1 subfamily. Monomer. Zn(2+) is required as a cofactor.

Its subcellular location is the cytoplasm. It catalyses the reaction tRNA(Glu) + L-glutamate + ATP = L-glutamyl-tRNA(Glu) + AMP + diphosphate. Its function is as follows. Catalyzes the attachment of glutamate to tRNA(Glu) in a two-step reaction: glutamate is first activated by ATP to form Glu-AMP and then transferred to the acceptor end of tRNA(Glu). In Nocardioides sp. (strain ATCC BAA-499 / JS614), this protein is Glutamate--tRNA ligase.